Here is a 338-residue protein sequence, read N- to C-terminus: Tryptophan--tRNA ligase (338 aa).

ATP contacts are provided by residues 18 to 20 and 26 to 27; these read QPS and GN. A 'HIGH' region motif is present at residues 19-27; sequence PSGNLTIGN. Residue Asp142 participates in L-tryptophan binding. ATP is bound by residues 154 to 156, Ile193, and 202 to 206; these read GND and KMSKS. The 'KMSKS' region motif lies at 202 to 206; sequence KMSKS.

The protein belongs to the class-I aminoacyl-tRNA synthetase family. As to quaternary structure, homodimer.

The protein localises to the cytoplasm. It carries out the reaction tRNA(Trp) + L-tryptophan + ATP = L-tryptophyl-tRNA(Trp) + AMP + diphosphate + H(+). In terms of biological role, catalyzes the attachment of tryptophan to tRNA(Trp). This Clostridium tetani (strain Massachusetts / E88) protein is Tryptophan--tRNA ligase.